The primary structure comprises 377 residues: uncharacterized protein (377 aa).

7 helical membrane-spanning segments follow: residues 21–41, 66–86, 163–183, 197–217, 236–256, 292–312, and 339–359; these read WLLA…LVLF, LVTF…FGLG, IGVL…GIVL, AILF…IAII, FYMG…YHIF, VNLI…FLIL, and IYFL…ELLF.

The protein resides in the cell membrane. This is an uncharacterized protein from Mycoplasma pneumoniae (strain ATCC 29342 / M129 / Subtype 1) (Mycoplasmoides pneumoniae).